The following is a 312-amino-acid chain: Beta-ketoacyl-[acyl-carrier-protein] synthase III (312 aa).

Active-site residues include Cys-112 and His-237. The tract at residues 238–242 is ACP-binding; sequence QANIR. The active site involves Asn-267.

It belongs to the thiolase-like superfamily. FabH family. As to quaternary structure, homodimer.

Its subcellular location is the cytoplasm. The enzyme catalyses malonyl-[ACP] + acetyl-CoA + H(+) = 3-oxobutanoyl-[ACP] + CO2 + CoA. It participates in lipid metabolism; fatty acid biosynthesis. In terms of biological role, catalyzes the condensation reaction of fatty acid synthesis by the addition to an acyl acceptor of two carbons from malonyl-ACP. Catalyzes the first condensation reaction which initiates fatty acid synthesis and may therefore play a role in governing the total rate of fatty acid production. Possesses both acetoacetyl-ACP synthase and acetyl transacylase activities. Its substrate specificity determines the biosynthesis of branched-chain and/or straight-chain of fatty acids. This Bacillus pumilus (strain SAFR-032) protein is Beta-ketoacyl-[acyl-carrier-protein] synthase III.